Here is a 384-residue protein sequence, read N- to C-terminus: Monomeric sarcosine oxidase (384 aa).

Residue 6–36 participates in FAD binding; it reads DVIVIGLGGMGSAAAHHLSARGARVLGLEKF. C315 is modified (S-8alpha-FAD cysteine).

The protein belongs to the MSOX/MTOX family. MSOX subfamily. Monomer. FAD is required as a cofactor.

The protein localises to the cytoplasm. The catalysed reaction is sarcosine + O2 + H2O = formaldehyde + glycine + H2O2. In terms of biological role, catalyzes the oxidative demethylation of sarcosine. The polypeptide is Monomeric sarcosine oxidase (Streptomyces avermitilis (strain ATCC 31267 / DSM 46492 / JCM 5070 / NBRC 14893 / NCIMB 12804 / NRRL 8165 / MA-4680)).